We begin with the raw amino-acid sequence, 203 residues long: Ribosomal RNA small subunit methyltransferase G (203 aa).

Residues Gly73, Leu78, 124 to 125 (VE), and Arg139 contribute to the S-adenosyl-L-methionine site.

This sequence belongs to the methyltransferase superfamily. RNA methyltransferase RsmG family.

The protein localises to the cytoplasm. It catalyses the reaction guanosine(527) in 16S rRNA + S-adenosyl-L-methionine = N(7)-methylguanosine(527) in 16S rRNA + S-adenosyl-L-homocysteine. Specifically methylates the N7 position of guanine in position 527 of 16S rRNA. The protein is Ribosomal RNA small subunit methyltransferase G of Haemophilus influenzae (strain PittEE).